A 338-amino-acid chain; its full sequence is Ketol-acid reductoisomerase (NADP(+)) (338 aa).

Residues 1 to 181 (MNVFYDKDAD…GGGRAGIIET (181 aa)) form the KARI N-terminal Rossmann domain. NADP(+) is bound by residues 24 to 27 (YGSQ), R47, and S52. H107 is an active-site residue. G133 provides a ligand contact to NADP(+). The KARI C-terminal knotted domain occupies 182-327 (NFREETETDL…AKLRAMMPWI (146 aa)). Mg(2+)-binding residues include D190, E194, E226, and E230. Residue S251 participates in substrate binding.

This sequence belongs to the ketol-acid reductoisomerase family. It depends on Mg(2+) as a cofactor.

The enzyme catalyses (2R)-2,3-dihydroxy-3-methylbutanoate + NADP(+) = (2S)-2-acetolactate + NADPH + H(+). It catalyses the reaction (2R,3R)-2,3-dihydroxy-3-methylpentanoate + NADP(+) = (S)-2-ethyl-2-hydroxy-3-oxobutanoate + NADPH + H(+). Its pathway is amino-acid biosynthesis; L-isoleucine biosynthesis; L-isoleucine from 2-oxobutanoate: step 2/4. It functions in the pathway amino-acid biosynthesis; L-valine biosynthesis; L-valine from pyruvate: step 2/4. In terms of biological role, involved in the biosynthesis of branched-chain amino acids (BCAA). Catalyzes an alkyl-migration followed by a ketol-acid reduction of (S)-2-acetolactate (S2AL) to yield (R)-2,3-dihydroxy-isovalerate. In the isomerase reaction, S2AL is rearranged via a Mg-dependent methyl migration to produce 3-hydroxy-3-methyl-2-ketobutyrate (HMKB). In the reductase reaction, this 2-ketoacid undergoes a metal-dependent reduction by NADPH to yield (R)-2,3-dihydroxy-isovalerate. The polypeptide is Ketol-acid reductoisomerase (NADP(+)) (Burkholderia lata (strain ATCC 17760 / DSM 23089 / LMG 22485 / NCIMB 9086 / R18194 / 383)).